We begin with the raw amino-acid sequence, 620 residues long: MDSHTLIQALIYLGSAALIVPIAVRLGLGSVLGYLIAGCIIGPWGLRLVTDAESILHFAEIGVVLMLFIIGLELDPQRLWKLRAAVFGGGALQMVICGGLLGLFCMLLGLRWQVAELIGMTLALSSTAIAMQAMNERNLMVTQMGRSAFAVLLFQDIAAIPLVAMIPLLAASSASTTMGAFVLSALKVAGALALVVLLGRYVTRPALRFVARSGLREVFSAVALFLVFGFGLLLEEVGLSMAMGAFLAGVLLASSEYRHALESDIEPFKGLLLGLFFIGVGMSIDFGTLIENPLRIVILLLGFLIIKIAMLWLIARPLQVPNKQRRWFAVLLGQGSEFAFVVFGAAQMANVLEPEWAKSLTLAVALSMAATPILLVILNRLEQSSTEEAREADEIDEEQPRVIIAGFGRFGQITGRLLLSSGVKMVVLDHDPDHIETLRKFGMKVFYGDATRMDLLESAGAAKAEVLINAIDDPQTNLQLTEMVKEHFPHLQIIARARDVDHYIRLRQAGVEKPERETFEGALKTGRLALESLGLGPYEARERADVFRRFNIQMVEEMAMVENDTKARAAVYKRTSAMLSEIITEDREHLSLIQRHGWQGTEEGKHTGNMADEPETKPSS.

Helical transmembrane passes span 4 to 24 (HTLIQALIYLGSAALIVPIAV), 26 to 46 (LGLGSVLGYLIAGCIIGPWGL), 54 to 74 (SILHFAEIGVVLMLFIIGLEL), 90 to 110 (GALQMVICGGLLGLFCMLLGL), 114 to 134 (VAELIGMTLALSSTAIAMQAM), 149 to 169 (FAVLLFQDIAAIPLVAMIPLL), 178 to 198 (MGAFVLSALKVAGALALVVLL), 218 to 238 (VFSAVALFLVFGFGLLLEEVG), 270 to 290 (GLLLGLFFIGVGMSIDFGTLI), 294 to 314 (LRIVILLLGFLIIKIAMLWLI), 327 to 347 (WFAVLLGQGSEFAFVVFGAAQ), and 359 to 379 (SLTLAVALSMAATPILLVILN). The region spanning 399–518 (QPRVIIAGFG…AGVEKPERET (120 aa)) is the RCK N-terminal domain. Residues 597–620 (GWQGTEEGKHTGNMADEPETKPSS) form a disordered region.

The protein belongs to the monovalent cation:proton antiporter 2 (CPA2) transporter (TC 2.A.37) family. KefC subfamily. In terms of assembly, homodimer. Interacts with the regulatory subunit KefF.

It is found in the cell inner membrane. Its function is as follows. Pore-forming subunit of a potassium efflux system that confers protection against electrophiles. Catalyzes K(+)/H(+) antiport. The polypeptide is Glutathione-regulated potassium-efflux system protein KefC (Escherichia coli O45:K1 (strain S88 / ExPEC)).